Reading from the N-terminus, the 123-residue chain is NADH-quinone oxidoreductase subunit A (123 aa).

The next 3 membrane-spanning stretches (helical) occupy residues 11-31, 64-84, and 93-113; these read YLPI…IMIL, ICFY…AFLV, and IGKI…IGFI.

This sequence belongs to the complex I subunit 3 family. As to quaternary structure, NDH-1 is composed of 14 different subunits. Subunits NuoA, H, J, K, L, M, N constitute the membrane sector of the complex.

The protein resides in the cell inner membrane. The catalysed reaction is a quinone + NADH + 5 H(+)(in) = a quinol + NAD(+) + 4 H(+)(out). In terms of biological role, NDH-1 shuttles electrons from NADH, via FMN and iron-sulfur (Fe-S) centers, to quinones in the respiratory chain. The immediate electron acceptor for the enzyme in this species is believed to be ubiquinone. Couples the redox reaction to proton translocation (for every two electrons transferred, four hydrogen ions are translocated across the cytoplasmic membrane), and thus conserves the redox energy in a proton gradient. The sequence is that of NADH-quinone oxidoreductase subunit A from Rickettsia conorii (strain ATCC VR-613 / Malish 7).